A 491-amino-acid polypeptide reads, in one-letter code: Alpha-2-antiplasmin (491 aa).

Residues 1–27 (MALLRGLLVLSLSCLQGPCFTFSPVSA) form the signal peptide. Residues 28–39 (VDLPGQQPVSEQ) constitute a propeptide that is removed on maturation. Residues cysteine 70 and cysteine 143 are joined by a disulfide bond. Asparagine 126, asparagine 295, asparagine 309, and asparagine 316 each carry an N-linked (GlcNAc...) asparagine glycan. The disordered stretch occupies residues 439-491 (SALPQLQEQRDSPDNRLIGQNDKADFHGGKTFGPDLKLAPRMEEDYPQFSSPK). A Sulfotyrosine modification is found at tyrosine 484.

Belongs to the serpin family. As to quaternary structure, forms protease inhibiting heterodimer with TMPRSS7. Post-translationally, proteolytically cleaved at Pro-35 by both the prolyl endopeptidase FAP form and antiplasmin-cleaving enzyme FAP soluble form to generate mature alpha-2-antiplasmin. In terms of tissue distribution, expressed by the liver and secreted in plasma.

Its subcellular location is the secreted. Serine protease inhibitor. The major targets of this inhibitor are plasmin and trypsin, but it also inactivates matriptase-3/TMPRSS7 and chymotrypsin. The chain is Alpha-2-antiplasmin (Serpinf2) from Mus musculus (Mouse).